The following is a 410-amino-acid chain: Multifunctional CCA protein (410 aa).

Positions 8 and 11 each coordinate ATP. CTP contacts are provided by Gly-8 and Arg-11. Positions 21 and 23 each coordinate Mg(2+). 3 residues coordinate ATP: Arg-91, Arg-137, and Arg-140. Residues Arg-91, Arg-137, and Arg-140 each coordinate CTP. One can recognise an HD domain in the interval 228-329 (TGVHVLSVLQ…LELLQSFDVY (102 aa)).

It belongs to the tRNA nucleotidyltransferase/poly(A) polymerase family. Bacterial CCA-adding enzyme type 1 subfamily. As to quaternary structure, monomer. Can also form homodimers and oligomers. Mg(2+) serves as cofactor. Requires Ni(2+) as cofactor.

It carries out the reaction a tRNA precursor + 2 CTP + ATP = a tRNA with a 3' CCA end + 3 diphosphate. The enzyme catalyses a tRNA with a 3' CCA end + 2 CTP + ATP = a tRNA with a 3' CCACCA end + 3 diphosphate. In terms of biological role, catalyzes the addition and repair of the essential 3'-terminal CCA sequence in tRNAs without using a nucleic acid template. Adds these three nucleotides in the order of C, C, and A to the tRNA nucleotide-73, using CTP and ATP as substrates and producing inorganic pyrophosphate. tRNA 3'-terminal CCA addition is required both for tRNA processing and repair. Also involved in tRNA surveillance by mediating tandem CCA addition to generate a CCACCA at the 3' terminus of unstable tRNAs. While stable tRNAs receive only 3'-terminal CCA, unstable tRNAs are marked with CCACCA and rapidly degraded. This Pseudomonas paraeruginosa (strain DSM 24068 / PA7) (Pseudomonas aeruginosa (strain PA7)) protein is Multifunctional CCA protein.